The following is a 393-amino-acid chain: Prokineticin receptor 1 (393 aa).

Topologically, residues Met1 to Lys62 are extracellular. Asn11 carries an N-linked (GlcNAc...) asparagine glycan. The chain crosses the membrane as a helical span at residues Ile63–Phe83. Residues Ile84–Asn98 lie on the Cytoplasmic side of the membrane. The chain crosses the membrane as a helical span at residues Leu99 to Glu119. At Met120–Val146 the chain is on the extracellular side. Cys137 and Cys217 are oxidised to a cystine. A helical transmembrane segment spans residues Ser147–Val167. Residues His168–Ala179 are Cytoplasmic-facing. A helical transmembrane segment spans residues Ala180 to Phe200. Residues Thr201–Tyr232 lie on the Extracellular side of the membrane. Residues Phe233–Ala253 form a helical membrane-spanning segment. At Arg254–Thr282 the chain is on the cytoplasmic side. A helical membrane pass occupies residues Val283–Phe303. Residues Thr304 to Thr322 are Extracellular-facing. The helical transmembrane segment at Ala323–Val343 threads the bilayer. Over Thr344 to Lys393 the chain is Cytoplasmic.

The protein belongs to the G-protein coupled receptor 1 family. As to expression, expressed at high levels in the heart, skeletal muscle and pancreas. Expressed at lower levels in the brain, lung, liver and kidney.

It localises to the cell membrane. In terms of biological role, receptor for prokineticin 1. Exclusively coupled to the G(q) subclass of heteromeric G proteins. Activation leads to mobilization of calcium, stimulation of phosphoinositide turnover and activation of p44/p42 mitogen-activated protein kinase. May play a role during early pregnancy. The sequence is that of Prokineticin receptor 1 (Prokr1) from Mus musculus (Mouse).